We begin with the raw amino-acid sequence, 491 residues long: Cobyric acid synthase (491 aa).

Residues 249–439 (PIDIAVIKLP…IHGVFDGVEF (191 aa)) form the GATase cobBQ-type domain. The Nucleophile role is filled by C329. Residue H431 is part of the active site.

The protein belongs to the CobB/CobQ family. CobQ subfamily.

It participates in cofactor biosynthesis; adenosylcobalamin biosynthesis. Its function is as follows. Catalyzes amidations at positions B, D, E, and G on adenosylcobyrinic A,C-diamide. NH(2) groups are provided by glutamine, and one molecule of ATP is hydrogenolyzed for each amidation. In Clostridium tetani (strain Massachusetts / E88), this protein is Cobyric acid synthase.